The chain runs to 506 residues: Cobyric acid synthase (506 aa).

A GATase cobBQ-type domain is found at 260–453 (KVGVAAIYFP…FHGIFNEPAV (194 aa)). Catalysis depends on Cys341, which acts as the Nucleophile. The active site involves His445.

It belongs to the CobB/CobQ family. CobQ subfamily.

It participates in cofactor biosynthesis; adenosylcobalamin biosynthesis. Catalyzes amidations at positions B, D, E, and G on adenosylcobyrinic A,C-diamide. NH(2) groups are provided by glutamine, and one molecule of ATP is hydrogenolyzed for each amidation. This chain is Cobyric acid synthase, found in Chlorobium chlorochromatii (strain CaD3).